A 388-amino-acid chain; its full sequence is Xylose isomerase (388 aa).

Catalysis depends on residues His54 and Asp57. Mg(2+) contacts are provided by Glu181, Glu217, His220, Asp245, Asp255, Asp257, and Asp287.

Belongs to the xylose isomerase family. In terms of assembly, homotetramer. Requires Mg(2+) as cofactor.

It localises to the cytoplasm. The catalysed reaction is alpha-D-xylose = alpha-D-xylulofuranose. Functionally, involved in D-xylose catabolism. This chain is Xylose isomerase (xylA), found in Streptomyces rubiginosus.